The chain runs to 347 residues: 4-hydroxy-2-oxovalerate aldolase 2 (347 aa).

The region spanning 7–259 is the Pyruvate carboxyltransferase domain; that stretch reads VRITDTSLRD…KTGIDFFDIA (253 aa). Position 15–16 (15–16) interacts with substrate; the sequence is RD. Asp-16 contacts Mn(2+). His-19 functions as the Proton acceptor in the catalytic mechanism. The substrate site is built by Ser-169 and His-198. Mn(2+) contacts are provided by His-198 and His-200. Residue Tyr-289 coordinates substrate.

It belongs to the 4-hydroxy-2-oxovalerate aldolase family.

The catalysed reaction is (S)-4-hydroxy-2-oxopentanoate = acetaldehyde + pyruvate. This Mycobacterium ulcerans (strain Agy99) protein is 4-hydroxy-2-oxovalerate aldolase 2.